The chain runs to 1914 residues: Autophagy-related protein 2 homolog A (1914 aa).

The Chorein N-terminal domain maps to 14–112 (ERVCRYLLQH…LTLQPRQGSG (99 aa)). Phosphoserine is present on residues S764, S869, S875, and S877. The tract at residues 1222 to 1243 (DLHPPPRPPSPTEIAGQKLSES) is disordered. Phosphoserine occurs at positions 1246, 1282, and 1290. Residues 1299–1337 (GERSGAQAPLPPPGASSHTLGSKAKEHENEEEGDGDTLD) form a disordered region. The segment covering 1327–1337 (NEEEGDGDTLD) has biased composition (acidic residues). Positions 1337-1383 (DSDEFCILDAPGLGIAPRDGEPIVTQLHPGPIIVHDGHFSQPLGSTD) are WIPI-interacting. S1381 is modified (phosphoserine). 3 disordered regions span residues 1427-1452 (LTGP…TQGG), 1589-1634 (MVPG…SSSD), and 1803-1822 (RSLQ…QPAD). Residues 1429–1446 (GPRVSPSRSSGPNRPQNS) are compositionally biased toward low complexity.

The protein belongs to the ATG2 family. As to quaternary structure, interacts with ATG9A (via C-terminus). Interacts with TMEM41B. Interacts with VMP1.

The protein localises to the preautophagosomal structure membrane. It localises to the lipid droplet. The protein resides in the endoplasmic reticulum membrane. It carries out the reaction a 1,2-diacyl-sn-glycero-3-phospho-L-serine(in) = a 1,2-diacyl-sn-glycero-3-phospho-L-serine(out). The catalysed reaction is a 1,2-diacyl-sn-glycero-3-phosphoethanolamine(in) = a 1,2-diacyl-sn-glycero-3-phosphoethanolamine(out). Functionally, lipid transfer protein involved in autophagosome assembly. Tethers the edge of the isolation membrane (IM) to the endoplasmic reticulum (ER) and mediates direct lipid transfer from ER to IM for IM expansion. Binds to the ER exit site (ERES), which is the membrane source for autophagosome formation, and extracts phospholipids from the membrane source and transfers them to ATG9 (ATG9A or ATG9B) to the IM for membrane expansion. Lipid transfer activity is enhanced by WIPI1 and WDR45/WIPI4, which promote ATG2A-association with phosphatidylinositol 3-monophosphate (PI3P)-containing membranes. Also regulates lipid droplets morphology and distribution within the cell. Its function is as follows. (Microbial infection) Mediates the intracellular lifestyle of Cryptococcus neoformans by supporting infection. This Mus musculus (Mouse) protein is Autophagy-related protein 2 homolog A.